The following is a 263-amino-acid chain: MAEITAQLVKQLRDKTGAGMMDCKKALQETGGEMEKAIDWLRQKGLASAGKKAGRLTAEGLVDSYIHTGGRIGVLVEVNCETDFVARNEAFRSLVQDIAKQIAACPNVEYVSIDEIPPATVEREKAIAMGSDALKGKPENVKEKIVQGKMDKTLRELCLLDQPFIRDQSITVEELIKQAIAQLGENVKVRRFVRFVMGEGIEKEEANLAEEVAAQIAAKEAPPAVVEAPVAETPEPAVAETPEAKPAATESKPAKSKSAKKKK.

The involved in Mg(2+) ion dislocation from EF-Tu stretch occupies residues 82 to 85 (TDFV). Residues 221–251 (APPAVVEAPVAETPEPAVAETPEAKPAATES) show a composition bias toward low complexity. The interval 221-263 (APPAVVEAPVAETPEPAVAETPEAKPAATESKPAKSKSAKKKK) is disordered. The span at 254 to 263 (AKSKSAKKKK) shows a compositional bias: basic residues.

It belongs to the EF-Ts family.

The protein localises to the cytoplasm. Its function is as follows. Associates with the EF-Tu.GDP complex and induces the exchange of GDP to GTP. It remains bound to the aminoacyl-tRNA.EF-Tu.GTP complex up to the GTP hydrolysis stage on the ribosome. The chain is Elongation factor Ts from Cyanothece sp. (strain PCC 7425 / ATCC 29141).